We begin with the raw amino-acid sequence, 376 residues long: Erythronate-4-phosphate dehydrogenase (376 aa).

Residues Ser-45 and Thr-67 each contribute to the substrate site. Position 147 (Asp-147) interacts with NAD(+). Arg-209 is an active-site residue. Asp-233 serves as a coordination point for NAD(+). Residue Glu-238 is part of the active site. His-255 functions as the Proton donor in the catalytic mechanism. Residue Gly-258 participates in NAD(+) binding. Residue Tyr-259 participates in substrate binding.

It belongs to the D-isomer specific 2-hydroxyacid dehydrogenase family. PdxB subfamily. Homodimer.

Its subcellular location is the cytoplasm. It carries out the reaction 4-phospho-D-erythronate + NAD(+) = (R)-3-hydroxy-2-oxo-4-phosphooxybutanoate + NADH + H(+). It participates in cofactor biosynthesis; pyridoxine 5'-phosphate biosynthesis; pyridoxine 5'-phosphate from D-erythrose 4-phosphate: step 2/5. In terms of biological role, catalyzes the oxidation of erythronate-4-phosphate to 3-hydroxy-2-oxo-4-phosphonooxybutanoate. The sequence is that of Erythronate-4-phosphate dehydrogenase from Shewanella baltica (strain OS185).